The chain runs to 328 residues: Glucokinase (328 aa).

16–21 contributes to the ATP binding site; that stretch reads ADIGGT.

Belongs to the bacterial glucokinase family.

Its subcellular location is the cytoplasm. It catalyses the reaction D-glucose + ATP = D-glucose 6-phosphate + ADP + H(+). This chain is Glucokinase, found in Neisseria gonorrhoeae (strain ATCC 700825 / FA 1090).